A 276-amino-acid chain; its full sequence is 4-deoxy-L-threo-5-hexosulose-uronate ketol-isomerase (276 aa).

4 residues coordinate Zn(2+): His194, His196, Glu201, and His243.

Belongs to the KduI family. Requires Zn(2+) as cofactor.

The enzyme catalyses 5-dehydro-4-deoxy-D-glucuronate = 3-deoxy-D-glycero-2,5-hexodiulosonate. Its pathway is glycan metabolism; pectin degradation; 2-dehydro-3-deoxy-D-gluconate from pectin: step 4/5. Catalyzes the isomerization of 5-dehydro-4-deoxy-D-glucuronate to 3-deoxy-D-glycero-2,5-hexodiulosonate. The polypeptide is 4-deoxy-L-threo-5-hexosulose-uronate ketol-isomerase (Lachnoclostridium phytofermentans (strain ATCC 700394 / DSM 18823 / ISDg) (Clostridium phytofermentans)).